A 383-amino-acid chain; its full sequence is Dual-specificity RNA methyltransferase RlmN (383 aa).

E93 (proton acceptor) is an active-site residue. The 241-residue stretch at 99 to 339 (EETRGTLCVS…TTIRKTRGDD (241 aa)) folds into the Radical SAM core domain. Cysteines 106 and 344 form a disulfide. 3 residues coordinate [4Fe-4S] cluster: C113, C117, and C120. S-adenosyl-L-methionine is bound by residues 170 to 171 (GE), S202, 224 to 226 (SLH), and N301. C344 functions as the S-methylcysteine intermediate in the catalytic mechanism.

This sequence belongs to the radical SAM superfamily. RlmN family. Requires [4Fe-4S] cluster as cofactor.

The protein resides in the cytoplasm. It carries out the reaction adenosine(2503) in 23S rRNA + 2 reduced [2Fe-2S]-[ferredoxin] + 2 S-adenosyl-L-methionine = 2-methyladenosine(2503) in 23S rRNA + 5'-deoxyadenosine + L-methionine + 2 oxidized [2Fe-2S]-[ferredoxin] + S-adenosyl-L-homocysteine. It catalyses the reaction adenosine(37) in tRNA + 2 reduced [2Fe-2S]-[ferredoxin] + 2 S-adenosyl-L-methionine = 2-methyladenosine(37) in tRNA + 5'-deoxyadenosine + L-methionine + 2 oxidized [2Fe-2S]-[ferredoxin] + S-adenosyl-L-homocysteine. Functionally, specifically methylates position 2 of adenine 2503 in 23S rRNA and position 2 of adenine 37 in tRNAs. m2A2503 modification seems to play a crucial role in the proofreading step occurring at the peptidyl transferase center and thus would serve to optimize ribosomal fidelity. The polypeptide is Dual-specificity RNA methyltransferase RlmN (Ralstonia pickettii (strain 12J)).